We begin with the raw amino-acid sequence, 129 residues long: SPbeta prophage-derived protein NrdI (129 aa).

Belongs to the NrdI family.

Its function is as follows. Probably involved in ribonucleotide reductase function. The chain is SPbeta prophage-derived protein NrdI (nrdIB) from Bacillus subtilis (strain 168).